The primary structure comprises 198 residues: Capsid protein (198 aa).

It localises to the virion. The polypeptide is Capsid protein (Vitis vinifera (Grape)).